Reading from the N-terminus, the 257-residue chain is Uxu operon transcriptional regulator (257 aa).

The 69-residue stretch at 8–76 folds into the HTH gntR-type domain; that stretch reads QRPYQEVGAM…RGAGIYVLDN (69 aa). The H-T-H motif DNA-binding region spans 36–55; it reads EREIAEMLDVTRTVVREALI.

Functionally, repressor for the uxuRBA operon. The chain is Uxu operon transcriptional regulator (uxuR) from Escherichia coli (strain K12).